The following is a 161-amino-acid chain: Dihydrofolate reductase (161 aa).

Residues 2 to 161 (NISLIAAISK…YNYSFEILSR (160 aa)) form the DHFR domain. 6-8 (IAA) is a substrate binding site. NADP(+) is bound by residues 7–8 (AA) and 15–20 (IGYKNK). Asp-28 is a substrate binding site. 44-47 (GRLT) contributes to the NADP(+) binding site. Residue Arg-59 participates in substrate binding. Residues 64–66 (ISS) and 96–101 (IGGAKI) each bind NADP(+). Position 115 (Thr-115) interacts with substrate.

This sequence belongs to the dihydrofolate reductase family.

The catalysed reaction is (6S)-5,6,7,8-tetrahydrofolate + NADP(+) = 7,8-dihydrofolate + NADPH + H(+). It participates in cofactor biosynthesis; tetrahydrofolate biosynthesis; 5,6,7,8-tetrahydrofolate from 7,8-dihydrofolate: step 1/1. Its function is as follows. Key enzyme in folate metabolism. Catalyzes an essential reaction for de novo glycine and purine synthesis, and for DNA precursor synthesis. In Buchnera aphidicola subsp. Acyrthosiphon pisum (strain APS) (Acyrthosiphon pisum symbiotic bacterium), this protein is Dihydrofolate reductase (folA).